The following is a 525-amino-acid chain: GMP synthase [glutamine-hydrolyzing] (525 aa).

Positions 9 to 207 (RILILDFGSQ…VLEISGCEAL (199 aa)) constitute a Glutamine amidotransferase type-1 domain. The active-site Nucleophile is Cys86. Catalysis depends on residues His181 and Glu183. The region spanning 208–400 (WTPANIVEDA…LGLPYDMVYR (193 aa)) is the GMPS ATP-PPase domain. 235 to 241 (SGGVDSS) serves as a coordination point for ATP.

As to quaternary structure, homodimer.

The catalysed reaction is XMP + L-glutamine + ATP + H2O = GMP + L-glutamate + AMP + diphosphate + 2 H(+). Its pathway is purine metabolism; GMP biosynthesis; GMP from XMP (L-Gln route): step 1/1. Its function is as follows. Catalyzes the synthesis of GMP from XMP. In Ectopseudomonas mendocina (strain ymp) (Pseudomonas mendocina), this protein is GMP synthase [glutamine-hydrolyzing].